Reading from the N-terminus, the 1015-residue chain is Protein HIRA (1015 aa).

WD repeat units follow at residues 11–53 (HNGK…QEDD) and 68–107 (NHLACVNCVRWSNSGMYLASGGDDKLIMVWKRATYIGPST). Ser-111 bears the Phosphoserine mark. WD repeat units lie at residues 129–168 (SHSGDVMDVAWSPHDAWLASCSVDNTVVIWNAVKFPEILA), 172–211 (GHSGLVKGLTWDPVGKYIASQADDRSLKVWRTLDWQLETS), 220–263 (GGTT…TNMD), 266–322 (GHRK…PLVV), and 326–367 (LFDK…DPLS). The interval 408–431 (QQQQQLDQKNATTRETSSASSVTG) is disordered. A compositionally biased stretch (polar residues) spans 413-431 (LDQKNATTRETSSASSVTG). Positions 421-479 (RETSSASSVTGVVNGESLEDIRKNLLKKQVETRTADGRRRITPLCIAQLDTGDFSTAFF) are interaction with ASF1A. The interaction with CCNA1 stretch occupies residues 421–727 (RETSSASSVT…RLKCNREGKE (307 aa)). The required for repression of histone gene transcription stretch occupies residues 439-475 (EDIRKNLLKKQVETRTADGRRRITPLCIAQLDTGDFS). 2 stretches are compositionally biased toward low complexity: residues 494–507 (SSPSGQQLLPLDSS) and 540–556 (ATSTPAASSPSVLTTPS). The segment at 494–558 (SSPSGQQLLP…PSVLTTPSKI (65 aa)) is disordered. Residue Ser-548 is modified to Phosphoserine. Thr-554 carries the phosphothreonine modification. Ser-556 carries the phosphoserine modification. Residue Thr-575 is modified to Phosphothreonine. Phosphoserine is present on residues Ser-583, Ser-608, Ser-609, Ser-610, Ser-612, Ser-659, and Ser-673. Interaction with PAX3 regions lie at residues 593–737 (KEQN…SRVL) and 738–826 (TAAG…SQIL). Residues 594 to 824 (EQNLVKELRS…LSGSDMTVSQ (231 aa)) are interaction with histone H2B. The span at 603–617 (SRELESSSDSDEKVH) shows a compositional bias: basic and acidic residues. The disordered stretch occupies residues 603–623 (SRELESSSDSDEKVHLAKPSS). Residues 736–1015 (VLTAAGSCDV…QEQLDILRDK (280 aa)) form an interaction with histone H4 region.

It belongs to the WD repeat HIR1 family. In terms of assembly, interacts with CCNA1, HIRIP3 and NFU1/HIRIP5. Part of a complex which includes ASF1A, CABIN1, histone H3.3, histone H4 and UBN1. Interacts with histone H2B, histone H3-3B, PAX3 and PAX7. Post-translationally, sumoylated. In terms of processing, phosphorylated by CDK2/CCNA1 and CDK2/CCNE1 on Thr-554 in vitro. Also phosphorylated on Thr-554 in vivo. Expressed in cerebrum, cerebellum, heart, kidney, liver, lung and spleen.

Its subcellular location is the nucleus. The protein resides in the PML body. Its function is as follows. Required for the periodic repression of histone gene transcription during the cell cycle. Cooperates with ASF1A to promote replication-independent chromatin assembly. Required for the formation of senescence-associated heterochromatin foci (SAHF) and efficient senescence-associated cell cycle exit. The sequence is that of Protein HIRA (Hira) from Mus musculus (Mouse).